The sequence spans 86 residues: Small ribosomal subunit protein uS17 (86 aa).

Belongs to the universal ribosomal protein uS17 family. In terms of assembly, part of the 30S ribosomal subunit.

One of the primary rRNA binding proteins, it binds specifically to the 5'-end of 16S ribosomal RNA. This Caldicellulosiruptor bescii (strain ATCC BAA-1888 / DSM 6725 / KCTC 15123 / Z-1320) (Anaerocellum thermophilum) protein is Small ribosomal subunit protein uS17.